The chain runs to 691 residues: Methionine--tRNA ligase (691 aa).

The 'HIGH' region motif lies at 15-25 (PYTNGPIHIGH). Positions 147, 150, 160, and 163 each coordinate Zn(2+). The 'KMSKS' region signature appears at 336 to 340 (KLSTS). T339 lines the ATP pocket. In terms of domain architecture, tRNA-binding spans 589–691 (DFTKMDLRVG…DGVKAGTTIN (103 aa)).

Belongs to the class-I aminoacyl-tRNA synthetase family. MetG type 1 subfamily. In terms of assembly, homodimer. The cofactor is Zn(2+).

It localises to the cytoplasm. It catalyses the reaction tRNA(Met) + L-methionine + ATP = L-methionyl-tRNA(Met) + AMP + diphosphate. In terms of biological role, is required not only for elongation of protein synthesis but also for the initiation of all mRNA translation through initiator tRNA(fMet) aminoacylation. The sequence is that of Methionine--tRNA ligase from Christiangramia forsetii (strain DSM 17595 / CGMCC 1.15422 / KT0803) (Gramella forsetii).